Consider the following 370-residue polypeptide: Aminomethyltransferase (370 aa).

The protein belongs to the GcvT family. The glycine cleavage system is composed of four proteins: P, T, L and H.

The enzyme catalyses N(6)-[(R)-S(8)-aminomethyldihydrolipoyl]-L-lysyl-[protein] + (6S)-5,6,7,8-tetrahydrofolate = N(6)-[(R)-dihydrolipoyl]-L-lysyl-[protein] + (6R)-5,10-methylene-5,6,7,8-tetrahydrofolate + NH4(+). Functionally, the glycine cleavage system catalyzes the degradation of glycine. The chain is Aminomethyltransferase from Clostridium botulinum (strain ATCC 19397 / Type A).